A 610-amino-acid polypeptide reads, in one-letter code: UvrABC system protein C (610 aa).

A GIY-YIG domain is found at serine 16 to valine 94. A UVR domain is found at glutamine 204–valine 239.

It belongs to the UvrC family. As to quaternary structure, interacts with UvrB in an incision complex.

It is found in the cytoplasm. Functionally, the UvrABC repair system catalyzes the recognition and processing of DNA lesions. UvrC both incises the 5' and 3' sides of the lesion. The N-terminal half is responsible for the 3' incision and the C-terminal half is responsible for the 5' incision. This Yersinia pseudotuberculosis serotype O:1b (strain IP 31758) protein is UvrABC system protein C.